A 324-amino-acid polypeptide reads, in one-letter code: Probable RuBisCO transcriptional regulator (324 aa).

The region spanning 8 to 65 is the HTH lysR-type domain; that stretch reads FSLEQLRILKAIATEGSFKKAAESLYMTQPAISLQIQTLEKKLNIALFDRSGRRALMT. Positions 25-44 form a DNA-binding region, H-T-H motif; that stretch reads FKKAAESLYMTQPAISLQIQ.

It belongs to the LysR transcriptional regulatory family.

It is found in the plastid. The protein localises to the cyanelle. Trans-acting transcriptional regulator of RuBisCO genes (rbcL and rbcS) expression. This is Probable RuBisCO transcriptional regulator (rbcR) from Cyanophora paradoxa.